Here is a 601-residue protein sequence, read N- to C-terminus: Elongation factor 4 (601 aa).

The 183-residue stretch at 6–188 (DHIRNFSIVA…AIVHQLPPPR (183 aa)) folds into the tr-type G domain. GTP contacts are provided by residues 18–23 (DHGKST) and 135–138 (NKVD).

This sequence belongs to the TRAFAC class translation factor GTPase superfamily. Classic translation factor GTPase family. LepA subfamily.

Its subcellular location is the cell inner membrane. It carries out the reaction GTP + H2O = GDP + phosphate + H(+). In terms of biological role, required for accurate and efficient protein synthesis under certain stress conditions. May act as a fidelity factor of the translation reaction, by catalyzing a one-codon backward translocation of tRNAs on improperly translocated ribosomes. Back-translocation proceeds from a post-translocation (POST) complex to a pre-translocation (PRE) complex, thus giving elongation factor G a second chance to translocate the tRNAs correctly. Binds to ribosomes in a GTP-dependent manner. The protein is Elongation factor 4 of Mesorhizobium japonicum (strain LMG 29417 / CECT 9101 / MAFF 303099) (Mesorhizobium loti (strain MAFF 303099)).